The following is a 124-amino-acid chain: MARLAGVDLPREKRMEIALTYIYGIGRTRSKEILDATGVSPDLRSKDLSDEDLAKLREYIEESLKVEGDLRREVQADIRRKIEIGCYQGLRHRRGLPVRGQRTKTNARTRKGPKRTIAGKKKAK.

Positions glycine 95–lysine 124 are disordered.

This sequence belongs to the universal ribosomal protein uS13 family. In terms of assembly, part of the 30S ribosomal subunit. Forms a loose heterodimer with protein S19. Forms two bridges to the 50S subunit in the 70S ribosome.

Functionally, located at the top of the head of the 30S subunit, it contacts several helices of the 16S rRNA. In the 70S ribosome it contacts the 23S rRNA (bridge B1a) and protein L5 of the 50S subunit (bridge B1b), connecting the 2 subunits; these bridges are implicated in subunit movement. Contacts the tRNAs in the A and P-sites. The protein is Small ribosomal subunit protein uS13 of Rhodococcus jostii (strain RHA1).